Consider the following 652-residue polypeptide: Probable endo-1,3(4)-beta-glucanase AFUB_029980 (652 aa).

The N-terminal stretch at 1 to 21 (MAPSSLLLSVGSLITSSLVSA) is a signal peptide. The region spanning 36–289 (ESWQGESFIN…WAGNVFAEST (254 aa)) is the GH16 domain. N-linked (GlcNAc...) asparagine glycosylation is present at Asn-64. Glu-145 (nucleophile) is an active-site residue. The active-site Proton donor is the Glu-150. Asn-200 and Asn-208 each carry an N-linked (GlcNAc...) asparagine glycan. Residues 379–423 (NTVATSAADHATPSSAETTTVPAATGAPSVSATEGGDSELESTST) are disordered. Residues 390–410 (TPSSAETTTVPAATGAPSVSA) are compositionally biased toward polar residues. A glycan (N-linked (GlcNAc...) asparagine) is linked at Asn-453. Residues 509 to 551 (SEIPTAPPEPVSQAVSTGSFDDSDTAQGDSEEQGSIASASVAP) are disordered. The segment covering 529-540 (DDSDTAQGDSEE) has biased composition (acidic residues). Asn-630 carries the GPI-anchor amidated asparagine lipid modification. Positions 631–652 (GANRMSVGLSGLIGVMFIAALA) are cleaved as a propeptide — removed in mature form.

This sequence belongs to the glycosyl hydrolase 16 family.

It is found in the cell membrane. The catalysed reaction is Endohydrolysis of (1-&gt;3)- or (1-&gt;4)-linkages in beta-D-glucans when the glucose residue whose reducing group is involved in the linkage to be hydrolyzed is itself substituted at C-3.. Functionally, mixed-linked glucanase involved in the degradation of complex natural cellulosic substrates. This Aspergillus fumigatus (strain CBS 144.89 / FGSC A1163 / CEA10) (Neosartorya fumigata) protein is Probable endo-1,3(4)-beta-glucanase AFUB_029980.